The primary structure comprises 89 residues: Bombyxin B-2 (89 aa).

The first 19 residues, 1–19 (MKTSVMFMLVFVISLMCSS), serve as a signal peptide directing secretion. Disulfide bonds link cysteine 29–cysteine 75, cysteine 41–cysteine 88, and cysteine 74–cysteine 79. A propeptide spans 48 to 66 (SGAQYAPYFWTRQYLGSRG) (c peptide like).

Belongs to the insulin family. In terms of assembly, heterodimer of a B chain and an A chain linked by two disulfide bonds.

It localises to the secreted. Brain peptide responsible for activation of prothoracic glands to produce ecdysone in insects. This Bombyx mori (Silk moth) protein is Bombyxin B-2 (BBXB2).